A 207-amino-acid polypeptide reads, in one-letter code: Outer-membrane lipoprotein LolB (207 aa).

Residues 1-21 (MTLPDFRLIRLLPLASLVLTA) form the signal peptide. The N-palmitoyl cysteine moiety is linked to residue cysteine 22. A lipid anchor (S-diacylglycerol cysteine) is attached at cysteine 22.

It belongs to the LolB family. In terms of assembly, monomer.

The protein resides in the cell outer membrane. Its function is as follows. Plays a critical role in the incorporation of lipoproteins in the outer membrane after they are released by the LolA protein. This Salmonella agona (strain SL483) protein is Outer-membrane lipoprotein LolB.